Consider the following 128-residue polypeptide: Ferric uptake regulation protein homolog (128 aa).

It belongs to the Fur family.

The chain is Ferric uptake regulation protein homolog from Archaeoglobus fulgidus (strain ATCC 49558 / DSM 4304 / JCM 9628 / NBRC 100126 / VC-16).